A 496-amino-acid polypeptide reads, in one-letter code: MKEIESFLVYSSSILPECILIFSSIGILSIDLLSLPNEGDTFWSYSISLAALAISIIILLLQWNKEPVLTFSETFQISRFNDIFRFFLLICSFLCIPLSVDYIRCTKMPVTEFLLFVLTATLGGMFLCGANDLISIFVASECLALSSYLLSGYTKRDVRSNEAMMKYLLMGGASSSILVYGFSLPYGLSGGEIQLRGMVNGLINMQMYNSAGVSIAMIFILVGIGFKLSLVPFHQWTPDVYEGSPTPVVAFFSVTSKVAALALATRLFHILFSSLSNEWHLPLEILAILSMILGNLIAVTQTSMKRMLAYSSISQIGYILIGIIAGDSDNGYASMITYMLIYIFMNLGTFACITSFGLRTGTDNIRDYAGLYRKDPILTLSLVLCLLSLGGIPPLAGFFGKLYLFWCGWKAGLYFLVSIALFTSVISIYYYSRIIKLLFTERNKRITIYMQDYKGSPYFLIPNNSIGITMILCTIASTVPGILINPIIAIAQNTLF.

The next 14 helical transmembrane spans lie at 13 to 33 (SILP…IDLL), 41 to 61 (TFWS…ILLL), 83 to 103 (IFRF…VDYI), 110 to 130 (VTEF…LCGA), 133 to 153 (LISI…LSGY), 168 to 188 (LLMG…PYGL), 213 to 233 (VSIA…LVPF), 245 to 265 (PTPV…ALAT), 279 to 299 (WHLP…LIAV), 307 to 327 (MLAY…IAGD), 338 to 358 (YMLI…SFGL), 380 to 400 (LSLV…GFFG), 413 to 435 (LYFL…SRII), and 470 to 490 (MILC…IIAI).

Belongs to the complex I subunit 2 family. NDH is composed of at least 16 different subunits, 5 of which are encoded in the nucleus.

The protein localises to the plastid. It localises to the chloroplast thylakoid membrane. It carries out the reaction a plastoquinone + NADH + (n+1) H(+)(in) = a plastoquinol + NAD(+) + n H(+)(out). The enzyme catalyses a plastoquinone + NADPH + (n+1) H(+)(in) = a plastoquinol + NADP(+) + n H(+)(out). NDH shuttles electrons from NAD(P)H:plastoquinone, via FMN and iron-sulfur (Fe-S) centers, to quinones in the photosynthetic chain and possibly in a chloroplast respiratory chain. The immediate electron acceptor for the enzyme in this species is believed to be plastoquinone. Couples the redox reaction to proton translocation, and thus conserves the redox energy in a proton gradient. The protein is NAD(P)H-quinone oxidoreductase subunit 2 A, chloroplastic of Psilotum nudum (Whisk fern).